The primary structure comprises 320 residues: MLIDQFGRKINYLRISVTQRCNFRCLYCMPKIPFDYQPKENLLSFEELFLFVKAAMDEGIEKIRITGGEPLLRKDLSIFIKMISDYKSDIDLAITTNGFLLKDFAKDLKNAGLKRLNISLDTLDHKKAKTLAQKDVLDSVLSGIDEALNLDLKVKLNTVALKNLNDDELISLLEFAKSKKAQIRFIEFMENTHAYGKLQGLKRDEIIQILSQKYQIQLIKKDEKAPVSIYKADDYEFGIIDPHSHEFCDSCNRIRLSAEGLLIPCLYFDEALSIKEAVRKGDIKAAVEILQEVLRNKPEKNKWSVVDNETSSRAFYQTGG.

In terms of domain architecture, Radical SAM core spans 5–225; the sequence is QFGRKINYLR…IQLIKKDEKA (221 aa). A GTP-binding site is contributed by arginine 14. [4Fe-4S] cluster contacts are provided by cysteine 21 and cysteine 25. Tyrosine 27 contacts S-adenosyl-L-methionine. Residue cysteine 28 participates in [4Fe-4S] cluster binding. Arginine 64 serves as a coordination point for GTP. An S-adenosyl-L-methionine-binding site is contributed by glycine 68. Threonine 95 contacts GTP. S-adenosyl-L-methionine is bound at residue serine 119. Lysine 155 serves as a coordination point for GTP. Methionine 189 contacts S-adenosyl-L-methionine. Cysteine 248 and cysteine 251 together coordinate [4Fe-4S] cluster. 253 to 255 lines the GTP pocket; the sequence is RIR. Cysteine 265 contacts [4Fe-4S] cluster.

It belongs to the radical SAM superfamily. MoaA family. In terms of assembly, monomer and homodimer. [4Fe-4S] cluster serves as cofactor.

It carries out the reaction GTP + AH2 + S-adenosyl-L-methionine = (8S)-3',8-cyclo-7,8-dihydroguanosine 5'-triphosphate + 5'-deoxyadenosine + L-methionine + A + H(+). The protein operates within cofactor biosynthesis; molybdopterin biosynthesis. Catalyzes the cyclization of GTP to (8S)-3',8-cyclo-7,8-dihydroguanosine 5'-triphosphate. The sequence is that of GTP 3',8-cyclase from Campylobacter jejuni (strain RM1221).